We begin with the raw amino-acid sequence, 712 residues long: Dynamin-1-like protein drp-1 (712 aa).

Residues 24–304 (QIQLPQIVVV…LMHHIRNCLP (281 aa)) enclose the Dynamin-type G domain. The tract at residues 34-41 (GSQSAGKS) is G1 motif. Residues 60–62 (VTR) are G2 motif. The segment at 148-151 (DLPG) is G3 motif. A G4 motif region spans residues 217-220 (TKLD). The segment at 247 to 250 (VNRS) is G5 motif. Residues 280 to 502 (SRNGTPYLAK…LAYINTKHPE (223 aa)) are interaction with caspase ced-9. Positions 523–542 (GRSRNRHASTGERAVSAHGE) are disordered. The region spanning 620–711 (VAIIERLIRN…IISEVRETQV (92 aa)) is the GED domain.

This sequence belongs to the TRAFAC class dynamin-like GTPase superfamily. Dynamin/Fzo/YdjA family. As to quaternary structure, interacts (via residues 280-502) with caspase ced-9; the interaction is enhanced by GTP rather than GDP; the interaction is probably direct and may occur at the mitochondrion. As to expression, highly expressed in neurons, in intestinal cells and in the body wall, pharyngeal, and vulval muscles.

It is found in the mitochondrion. The protein resides in the mitochondrion outer membrane. It localises to the cytoplasm. The protein localises to the cytosol. It catalyses the reaction GTP + H2O = GDP + phosphate + H(+). With respect to regulation, GTPase activity is increased by binding to phospholipid membranes. Its function is as follows. Functions in mitochondrial division. Functions in peroxisomal division. Mediates membrane fission, perhaps mainly of the mitochondrial outer membrane. Mitochondrial fission may be promoted by recruitment to mitochondrial membranes via the egl-1/ced-9 complex. Involved in the coordination of mitochondrial division with autophagy in response to acute heat stress during larval development. Plays a role in apoptosis by promoting mitochondrial elimination and cell-death execution, acting downstream of caspase ced-3, and perhaps independently of FIS1-related protein fis-2, caspase ced-9 and apoptosis-inducing factor AIFM/wah-1. Role in promoting apoptosis dependent upon cleavage of drp-1 by ced-3. Involved in negatively modulating longevity in concert with the Insulin/IGF-1-like signaling (IIS) mediated pathway. This Caenorhabditis elegans protein is Dynamin-1-like protein drp-1.